A 234-amino-acid chain; its full sequence is MEVSSIGSFQEHIDKTTDIVTLHPLLRNPIMPQPRGIYLITPDETDTARLIAHTAPLLNGIVWLQYRNKLANTALRTEQAQALLALCRPTGIPLLINDDLELAQTIGADGVHLGMHDSNASIARAQLGPHAIIGVSCYNQIERAKQAIKAGASYVGFGAFYPSHTKTTPYRATPELLRQTTHLGVPRVAIGGLTPKNIAPIIEAGAELLAVISGIYSAKNPITALKAYQSQFNI.

Residues 65 to 69 and Asn97 each bind 4-amino-2-methyl-5-(diphosphooxymethyl)pyrimidine; that span reads QYRNK. The Mg(2+) site is built by Asp98 and Asp117. 4-amino-2-methyl-5-(diphosphooxymethyl)pyrimidine is bound at residue Ser136. 163–165 contributes to the 2-[(2R,5Z)-2-carboxy-4-methylthiazol-5(2H)-ylidene]ethyl phosphate binding site; the sequence is SHT. Lys166 provides a ligand contact to 4-amino-2-methyl-5-(diphosphooxymethyl)pyrimidine. 2-[(2R,5Z)-2-carboxy-4-methylthiazol-5(2H)-ylidene]ethyl phosphate contacts are provided by residues Gly192 and 212 to 213; that span reads IS.

The protein belongs to the thiamine-phosphate synthase family. Mg(2+) is required as a cofactor.

It carries out the reaction 2-[(2R,5Z)-2-carboxy-4-methylthiazol-5(2H)-ylidene]ethyl phosphate + 4-amino-2-methyl-5-(diphosphooxymethyl)pyrimidine + 2 H(+) = thiamine phosphate + CO2 + diphosphate. It catalyses the reaction 2-(2-carboxy-4-methylthiazol-5-yl)ethyl phosphate + 4-amino-2-methyl-5-(diphosphooxymethyl)pyrimidine + 2 H(+) = thiamine phosphate + CO2 + diphosphate. The catalysed reaction is 4-methyl-5-(2-phosphooxyethyl)-thiazole + 4-amino-2-methyl-5-(diphosphooxymethyl)pyrimidine + H(+) = thiamine phosphate + diphosphate. The protein operates within cofactor biosynthesis; thiamine diphosphate biosynthesis; thiamine phosphate from 4-amino-2-methyl-5-diphosphomethylpyrimidine and 4-methyl-5-(2-phosphoethyl)-thiazole: step 1/1. Functionally, condenses 4-methyl-5-(beta-hydroxyethyl)thiazole monophosphate (THZ-P) and 2-methyl-4-amino-5-hydroxymethyl pyrimidine pyrophosphate (HMP-PP) to form thiamine monophosphate (TMP). In Xylella fastidiosa (strain Temecula1 / ATCC 700964), this protein is Thiamine-phosphate synthase.